A 139-amino-acid polypeptide reads, in one-letter code: MTERTLVLIKPDAVARGYVGEILGRIERKGLTISALDLRTAPGDIAAAHYAEHEGRPFYPGLLEFITGGPLVAAVLEGPRAIAAFRQLAGGTDPVEKAVPGTIRGDFGLEAQENLVHGSDSVESAEREIALWFPHLAAN.

ATP-binding residues include Lys10, Phe58, Arg86, Thr92, Arg104, and Asn114. The active-site Pros-phosphohistidine intermediate is His117.

It belongs to the NDK family. As to quaternary structure, homotetramer. Mg(2+) is required as a cofactor.

It is found in the cytoplasm. It carries out the reaction a 2'-deoxyribonucleoside 5'-diphosphate + ATP = a 2'-deoxyribonucleoside 5'-triphosphate + ADP. The catalysed reaction is a ribonucleoside 5'-diphosphate + ATP = a ribonucleoside 5'-triphosphate + ADP. In terms of biological role, major role in the synthesis of nucleoside triphosphates other than ATP. The ATP gamma phosphate is transferred to the NDP beta phosphate via a ping-pong mechanism, using a phosphorylated active-site intermediate. This chain is Nucleoside diphosphate kinase, found in Rhodococcus jostii (strain RHA1).